We begin with the raw amino-acid sequence, 446 residues long: MSQILTASQAEELHKSMVAYLSSIKASQSSNTLREELGIGDNFDEATCKKYEGLLEKKWTGIARLQRKILDLESKITSLQAELDSVPSMARSKQHQDPDNWLPAQSSAHTFESHRDAITSIAFHPVFTSLASGSEDCTIKIWDWELGELERTLKGHMRGVSGLDFGGQKGHTLLASCSGDLTIKLWDPSKDYANIRTLHGHDHSVSAVRFLTSTENLLVSASRDASIRIWDVSTGYCVRTITSNSIWFLDVSPSFDGKWLVAGGRDQAVTVWEVSSAEPRAALLGHDNDVQCCVFAPPASYEYLATLAGHKKAPLASSSSEFIATGSRDKTIKLWEARGRLIKTLVGHDNWIRGLVFHPSGKYLFSVSDDKTIRCWDLSQEGRLVKTISNAHGHFISCIRWAPPPRNAAAEASETTNGVSKKAPTKPAFQCVIATGSADSCVRVFK.

The LisH domain maps to Q9–D41. A coiled-coil region spans residues T60–V86. 8 WD repeats span residues S113–K154, H156–R196, G200–T240, S243–A282, G285–L345, G347–K386, A391–Q430, and V432–K446.

The protein belongs to the WD repeat LIS1/nudF family. Self-associates. Interacts with nudE and dynein.

The protein resides in the cytoplasm. The protein localises to the cytoskeleton. Its subcellular location is the spindle pole. In terms of biological role, positively regulates the activity of the minus-end directed microtubule motor protein dynein. May enhance dynein-mediated microtubule sliding by targeting dynein to the microtubule plus end. Required for nuclear migration during vegetative growth as well as development. Required for retrograde early endosome (EE) transport from the hyphal tip. Required for localization of dynein to the mitotic spindle poles. Recruits additional proteins to the dynein complex at SPBs. In Aspergillus terreus (strain NIH 2624 / FGSC A1156), this protein is Nuclear distribution protein nudF.